The sequence spans 146 residues: Protein LDOC1 (146 aa).

The protein belongs to the LDOC1 family. In terms of assembly, interacts with NOD2. As to expression, ubiquitously expressed with high levels in brain ant thyroid and low expression in placenta, liver and leukocytes. Expressed as well in six of the seven human breast cancer cell lines examined.

The protein localises to the nucleus. Functionally, may have an important role in the development and/or progression of some cancers. The polypeptide is Protein LDOC1 (LDOC1) (Homo sapiens (Human)).